The following is a 262-amino-acid chain: Phosphatidylglycerol--prolipoprotein diacylglyceryl transferase (262 aa).

4 helical membrane-spanning segments follow: residues Leu-9–Val-29, Ile-41–Ala-61, Ile-80–Val-100, and Leu-109–Leu-129. An a 1,2-diacyl-sn-glycero-3-phospho-(1'-sn-glycerol)-binding site is contributed by Arg-131. 3 helical membrane passes run Gln-167 to Phe-187, Gly-197 to Met-217, and Gly-226 to Ile-246.

The protein belongs to the Lgt family.

It localises to the cell membrane. The enzyme catalyses L-cysteinyl-[prolipoprotein] + a 1,2-diacyl-sn-glycero-3-phospho-(1'-sn-glycerol) = an S-1,2-diacyl-sn-glyceryl-L-cysteinyl-[prolipoprotein] + sn-glycerol 1-phosphate + H(+). It functions in the pathway protein modification; lipoprotein biosynthesis (diacylglyceryl transfer). In terms of biological role, catalyzes the transfer of the diacylglyceryl group from phosphatidylglycerol to the sulfhydryl group of the N-terminal cysteine of a prolipoprotein, the first step in the formation of mature lipoproteins. The chain is Phosphatidylglycerol--prolipoprotein diacylglyceryl transferase from Streptococcus pneumoniae (strain P1031).